Here is a 929-residue protein sequence, read N- to C-terminus: Thrombospondin-3b (929 aa).

The first 22 residues, 1–22 (MELRKIVPNLLVLYVAVHFSQS), serve as a signal peptide directing secretion. One can recognise a Laminin G-like domain in the interval 24-192 (EIKVINVLEL…VESVKLALGG (169 aa)). Asparagine 45 is a glycosylation site (N-linked (GlcNAc...) asparagine). Intrachain disulfides connect cysteine 277–cysteine 288, cysteine 282–cysteine 299, cysteine 319–cysteine 343, cysteine 349–cysteine 362, cysteine 356–cysteine 371, cysteine 374–cysteine 386, cysteine 392–cysteine 406, cysteine 400–cysteine 416, cysteine 418–cysteine 429, cysteine 445–cysteine 452, cysteine 457–cysteine 477, cysteine 493–cysteine 513, cysteine 516–cysteine 536, cysteine 552–cysteine 572, cysteine 575–cysteine 595, cysteine 613–cysteine 633, cysteine 653–cysteine 673, and cysteine 689–cysteine 910. In terms of domain architecture, EGF-like 1; calcium-binding spans 345-384 (DIDECAELSGSCVPNSVCINTVGSFKCGQCKAGFVGNQTV). A glycan (N-linked (GlcNAc...) asparagine) is linked at asparagine 381. An EGF-like 2 domain is found at 388–430 (ARRTCETLGYSPCDVNSHCVMGRNSDVSCVCNVGWAGNGNICG). TSP type-3 repeat units follow at residues 431-465 (PDSD…NSGQ), 466-501 (EDTD…NKDQ), 502-524 (QNSD…NGDQ), 525-560 (LDTD…NPMQ), 561-583 (TDRD…DPLQ), 584-621 (SDMD…NSSQ), 622-661 (LDSD…NPSQ), and 662-697 (IDTD…EVTM). The segment covering 602–613 (DGDGYQDTRDNC) has biased composition (basic and acidic residues). Residues 602-651 (DGDGYQDTRDNCPEVPNSSQLDSDNDGIGDECDDDDDNDGIPDILPPGPD) are disordered. Asparagine 618 carries an N-linked (GlcNAc...) asparagine glycan. Residues 624–641 (SDNDGIGDECDDDDDNDG) show a composition bias toward acidic residues. The TSP C-terminal domain occupies 701 to 915 (RAFQTVILDP…LGYRCNDSIP (215 aa)). An N-linked (GlcNAc...) asparagine glycan is attached at asparagine 911.

This sequence belongs to the thrombospondin family. As to quaternary structure, oligomer; disulfide-linked.

Its function is as follows. Adhesive glycoprotein that mediates cell-to-cell and cell-to-matrix interactions. Can bind to fibrinogen, fibronectin, laminin and type V collagen. The sequence is that of Thrombospondin-3b from Danio rerio (Zebrafish).